The chain runs to 615 residues: Dihydroxy-acid dehydratase (615 aa).

Aspartate 81 lines the Mg(2+) pocket. A [2Fe-2S] cluster-binding site is contributed by cysteine 122. Residues aspartate 123 and lysine 124 each coordinate Mg(2+). Lysine 124 bears the N6-carboxylysine mark. [2Fe-2S] cluster is bound at residue cysteine 197. Position 494 (glutamate 494) interacts with Mg(2+). Serine 520 (proton acceptor) is an active-site residue.

The protein belongs to the IlvD/Edd family. As to quaternary structure, homodimer. [2Fe-2S] cluster is required as a cofactor. The cofactor is Mg(2+).

It catalyses the reaction (2R)-2,3-dihydroxy-3-methylbutanoate = 3-methyl-2-oxobutanoate + H2O. It carries out the reaction (2R,3R)-2,3-dihydroxy-3-methylpentanoate = (S)-3-methyl-2-oxopentanoate + H2O. The protein operates within amino-acid biosynthesis; L-isoleucine biosynthesis; L-isoleucine from 2-oxobutanoate: step 3/4. It functions in the pathway amino-acid biosynthesis; L-valine biosynthesis; L-valine from pyruvate: step 3/4. Functions in the biosynthesis of branched-chain amino acids. Catalyzes the dehydration of (2R,3R)-2,3-dihydroxy-3-methylpentanoate (2,3-dihydroxy-3-methylvalerate) into 2-oxo-3-methylpentanoate (2-oxo-3-methylvalerate) and of (2R)-2,3-dihydroxy-3-methylbutanoate (2,3-dihydroxyisovalerate) into 2-oxo-3-methylbutanoate (2-oxoisovalerate), the penultimate precursor to L-isoleucine and L-valine, respectively. This is Dihydroxy-acid dehydratase from Salinispora arenicola (strain CNS-205).